We begin with the raw amino-acid sequence, 491 residues long: UDP-N-acetylmuramoyl-L-alanyl-D-glutamate--2,6-diaminopimelate ligase (491 aa).

Serine 30 is a UDP-N-acetyl-alpha-D-muramoyl-L-alanyl-D-glutamate binding site. 108 to 114 (GTNGKTT) contributes to the ATP binding site. Residues asparagine 149, 150–151 (TT), serine 177, glutamine 183, and arginine 185 contribute to the UDP-N-acetyl-alpha-D-muramoyl-L-alanyl-D-glutamate site. Lysine 217 bears the N6-carboxylysine mark. Residues arginine 383, 407–410 (DNPR), glycine 458, and glutamate 462 each bind meso-2,6-diaminopimelate. The Meso-diaminopimelate recognition motif motif lies at 407–410 (DNPR).

Belongs to the MurCDEF family. MurE subfamily. Mg(2+) is required as a cofactor. Post-translationally, carboxylation is probably crucial for Mg(2+) binding and, consequently, for the gamma-phosphate positioning of ATP.

The protein resides in the cytoplasm. It carries out the reaction UDP-N-acetyl-alpha-D-muramoyl-L-alanyl-D-glutamate + meso-2,6-diaminopimelate + ATP = UDP-N-acetyl-alpha-D-muramoyl-L-alanyl-gamma-D-glutamyl-meso-2,6-diaminopimelate + ADP + phosphate + H(+). Its pathway is cell wall biogenesis; peptidoglycan biosynthesis. Functionally, catalyzes the addition of meso-diaminopimelic acid to the nucleotide precursor UDP-N-acetylmuramoyl-L-alanyl-D-glutamate (UMAG) in the biosynthesis of bacterial cell-wall peptidoglycan. In Listeria innocua serovar 6a (strain ATCC BAA-680 / CLIP 11262), this protein is UDP-N-acetylmuramoyl-L-alanyl-D-glutamate--2,6-diaminopimelate ligase.